The following is an 80-amino-acid chain: U-actitoxin-Avd9a (80 aa).

Positions 1-20 (MNLKVLAVFVLCAILVVVTA) are cleaved as a signal peptide. Positions 21–39 (ERRGTETGVYKKDTLQDLI) are excised as a propeptide. The ShKT domain occupies 45 to 80 (CIDRFPTGTCKQVKKGGSCKNSDKYRMNCRKTCGLC). 3 cysteine pairs are disulfide-bonded: cysteine 45–cysteine 80, cysteine 54–cysteine 73, and cysteine 63–cysteine 77. Residues 68-69 (KY) form a crucial for binding to potassium channels region.

The protein belongs to the sea anemone type 1 potassium channel toxin family. Type 1b subfamily.

The protein resides in the secreted. Its subcellular location is the nematocyst. Its function is as follows. Inhibits voltage-gated potassium channels (Kv1/KCNA). The chain is U-actitoxin-Avd9a from Anemonia viridis (Snakelocks anemone).